A 436-amino-acid polypeptide reads, in one-letter code: 3-ketoacyl-CoA thiolase (436 aa).

Cys99 (acyl-thioester intermediate) is an active-site residue. Active-site proton acceptor residues include His392 and Cys422.

This sequence belongs to the thiolase-like superfamily. Thiolase family. Heterotetramer of two alpha chains (FadJ) and two beta chains (FadI).

It localises to the cytoplasm. The catalysed reaction is an acyl-CoA + acetyl-CoA = a 3-oxoacyl-CoA + CoA. The protein operates within lipid metabolism; fatty acid beta-oxidation. Functionally, catalyzes the final step of fatty acid oxidation in which acetyl-CoA is released and the CoA ester of a fatty acid two carbons shorter is formed. This is 3-ketoacyl-CoA thiolase from Yersinia pestis bv. Antiqua (strain Angola).